The following is a 644-amino-acid chain: Protein cueball (644 aa).

The signal sequence occupies residues 1 to 26 (MIRIRFGMDVLLVLLLATCLLTPAHG). Topologically, residues 27-531 (TPLEWDFAVT…VCLTPRVWTS (505 aa)) are extracellular. Residues asparagine 82 and asparagine 108 are each glycosylated (N-linked (GlcNAc...) asparagine). LDL-receptor class B repeat units follow at residues 121–166 (MNLF…DVCR), 167–211 (RKLY…DQLS), and 212–257 (DRLF…TNDA). N-linked (GlcNAc...) asparagine glycosylation is found at asparagine 175 and asparagine 190. A disordered region spans residues 280–301 (TTTSKPEEEDSTDSTDFTDPEP). Acidic residues predominate over residues 286-301 (EEEDSTDSTDFTDPEP). Residue asparagine 313 is glycosylated (N-linked (GlcNAc...) asparagine). EGF-like domains lie at 398-430 (EIRE…FTGE) and 433-471 (ELSV…ARCE). Intrachain disulfides connect cysteine 402-cysteine 411, cysteine 406-cysteine 421, cysteine 437-cysteine 447, cysteine 441-cysteine 459, and cysteine 461-cysteine 470. Residues asparagine 473 and asparagine 508 are each glycosylated (N-linked (GlcNAc...) asparagine). Residues 532–552 (SVIIILVVGIVSSLLLVAVIV) traverse the membrane as a helical segment. The Cytoplasmic portion of the chain corresponds to 553-644 (HGIRRLYKPK…LIHNMEDDLY (92 aa)).

This sequence belongs to the cueball family.

The protein resides in the cell membrane. Has a role in spermatogenesis and oogenesis. The protein is Protein cueball of Drosophila sechellia (Fruit fly).